The following is a 447-amino-acid chain: UDP-glycosyltransferase 76E5 (447 aa).

UDP-alpha-D-glucose is bound by residues Ser272, 324 to 326 (APQ), 341 to 349 (HCGWNSTLE), and 363 to 366 (NGEQ).

It belongs to the UDP-glycosyltransferase family.

This Arabidopsis thaliana (Mouse-ear cress) protein is UDP-glycosyltransferase 76E5 (UGT76E5).